Consider the following 355-residue polypeptide: 6-aminohexanoate-oligomer endohydrolase (355 aa).

Threonine 267 acts as the Nucleophile in catalysis.

The protein belongs to the peptidase S58 family. As to quaternary structure, heterotetramer composed of 4 alpha/beta heterodimers. In terms of processing, expressed as an inactive precursor that is cleaved autocatalytically at Asn266/Thr267 to generate an active enzyme composed of an alpha subunit and a beta subunit.

The enzyme catalyses [N-(6-aminohexanoyl)]n + H2O = [N-(6-aminohexanoyl)]n-x + [N-(6-aminohexanoyl)]x.. It participates in xenobiotic degradation; nylon-6 oligomer degradation. Its function is as follows. Involved in the degradation of nylon-6 oligomers. Degrades cyclic and linear oligomers of 6-aminohexanoate (Ahx) with a degree of polymerization greater than three by an endo-type mode. Cannot use Ahx cyclic dimer or the Ahx linear dimer. The chain is 6-aminohexanoate-oligomer endohydrolase from Kocuria sp. (strain KY2).